The following is a 196-amino-acid chain: FAD-linked sulfhydryl oxidase ERV2 (196 aa).

Over 1–12 (MKQIVKRSHAIR) the chain is Cytoplasmic. A helical; Signal-anchor membrane pass occupies residues 13-35 (IVAALGIIGLWMFFSSNELSIAT). Residues 36-196 (PGLIKAKSGI…SLEKEAKQHG (161 aa)) are Lumenal-facing. An ERV/ALR sulfhydryl oxidase domain is found at 72–174 (MGDDKVKKEV…YDCATILEDY (103 aa)). Residues lysine 78, arginine 83, and tryptophan 86 each coordinate FAD. Cysteines 121 and 124 form a disulfide. FAD is bound by residues histidine 127, cysteine 150, histidine 153, asparagine 157, lysine 162, and tyrosine 174. Cysteines 150 and 167 form a disulfide. Cysteines 176 and 178 form a disulfide.

In terms of assembly, homodimer. Interacts with the substrate protein PDI1, forming transient intermolecular disulfide bridges. FAD is required as a cofactor.

The protein localises to the endoplasmic reticulum membrane. The enzyme catalyses 2 R'C(R)SH + O2 = R'C(R)S-S(R)CR' + H2O2. In terms of biological role, FAD-dependent sulfhydryl oxidase that catalyzes disulfide bond formation in the endoplasmic reticulum lumen in parallel to ERO1. In Saccharomyces cerevisiae (strain ATCC 204508 / S288c) (Baker's yeast), this protein is FAD-linked sulfhydryl oxidase ERV2 (ERV2).